The following is a 275-amino-acid chain: Large ribosomal subunit protein uL2 (275 aa).

Residues 38–53 (SSKAGRNNNGRITTRH) are compositionally biased toward polar residues. 2 disordered regions span residues 38-59 (SSKAGRNNNGRITTRHQGGGHK) and 224-257 (AMNPIDHPHGGGEGRTAAGRDPVSPWGTPTKGFR).

It belongs to the universal ribosomal protein uL2 family. As to quaternary structure, part of the 50S ribosomal subunit. Forms a bridge to the 30S subunit in the 70S ribosome.

In terms of biological role, one of the primary rRNA binding proteins. Required for association of the 30S and 50S subunits to form the 70S ribosome, for tRNA binding and peptide bond formation. It has been suggested to have peptidyltransferase activity; this is somewhat controversial. Makes several contacts with the 16S rRNA in the 70S ribosome. The protein is Large ribosomal subunit protein uL2 of Burkholderia multivorans (strain ATCC 17616 / 249).